The primary structure comprises 234 residues: MTVHIGAAPGDIAETVLMPGDPLRAKWAAERFLENPVCVNEVRGMLGFTGMWRGNRVTIHGSGMGMPSLSIYANELLRDYGAKTLIRIGSCGAMQADVKLRDVILAMTASTLSTPSSGIFRELNYAPCADYGLLQAAYKAAEGKGSPIHVGGIYSSDVFYDERPDLNEQMVRHGVLAVEMEAAELYTLAARHKARALAVLTVSDHLLTEEALPSEERQSSFSDMVEIALEAAFS.

His-4 serves as a coordination point for a purine D-ribonucleoside. Phosphate contacts are provided by residues Gly-20, Arg-24, Arg-43, and 87 to 90; that span reads RIGS. A purine D-ribonucleoside-binding positions include Glu-162, 179–181, and 203–204; these read EME and SD. Asp-204 acts as the Proton donor in catalysis.

This sequence belongs to the PNP/UDP phosphorylase family. Homohexamer; trimer of homodimers.

It carries out the reaction a purine D-ribonucleoside + phosphate = a purine nucleobase + alpha-D-ribose 1-phosphate. The enzyme catalyses a purine 2'-deoxy-D-ribonucleoside + phosphate = a purine nucleobase + 2-deoxy-alpha-D-ribose 1-phosphate. Its function is as follows. Catalyzes the reversible phosphorolytic breakdown of the N-glycosidic bond in the beta-(deoxy)ribonucleoside molecules, with the formation of the corresponding free purine bases and pentose-1-phosphate. The protein is Purine nucleoside phosphorylase DeoD-type of Jannaschia sp. (strain CCS1).